The sequence spans 131 residues: Peptide methionine sulfoxide reductase MsrB (131 aa).

In terms of domain architecture, MsrB spans 8–130 (LDEWRSMLDP…NSVCIDLRPR (123 aa)). Zn(2+) is bound by residues cysteine 47, cysteine 50, cysteine 96, and cysteine 99. The Nucleophile role is filled by cysteine 119.

It belongs to the MsrB Met sulfoxide reductase family. Requires Zn(2+) as cofactor.

It catalyses the reaction L-methionyl-[protein] + [thioredoxin]-disulfide + H2O = L-methionyl-(R)-S-oxide-[protein] + [thioredoxin]-dithiol. This chain is Peptide methionine sulfoxide reductase MsrB, found in Pseudomonas putida (strain GB-1).